The chain runs to 275 residues: LexA repressor (275 aa).

The interval 1-50 (MKRSTPRPARSQAALTTSSEESPDRVERGGDGVATVTDFPDGPPDETGLT) is disordered. The H-T-H motif DNA-binding region spans 73 to 93 (MREIGEAVGLTSTSSVAHQLM). The disordered stretch occupies residues 114–151 (RSAESAVPDASAGHSPAADRAPSARRPPRGPSPIDSNP). Catalysis depends on for autocatalytic cleavage activity residues Ser199 and Lys236.

It belongs to the peptidase S24 family. As to quaternary structure, homodimer.

The catalysed reaction is Hydrolysis of Ala-|-Gly bond in repressor LexA.. In terms of biological role, represses a number of genes involved in the response to DNA damage (SOS response), including recA and lexA. In the presence of single-stranded DNA, RecA interacts with LexA causing an autocatalytic cleavage which disrupts the DNA-binding part of LexA, leading to derepression of the SOS regulon and eventually DNA repair. This chain is LexA repressor, found in Acidothermus cellulolyticus (strain ATCC 43068 / DSM 8971 / 11B).